Reading from the N-terminus, the 166-residue chain is uncharacterized protein (166 aa).

This sequence to B.subtilis YpjQ.

This is an uncharacterized protein from Bacillus subtilis (strain 168).